We begin with the raw amino-acid sequence, 117 residues long: UPF0102 protein FTW_1281 (117 aa).

This sequence belongs to the UPF0102 family.

This chain is UPF0102 protein FTW_1281, found in Francisella tularensis subsp. tularensis (strain WY96-3418).